Consider the following 388-residue polypeptide: Lipid-A-disaccharide synthase (388 aa).

It belongs to the LpxB family.

It catalyses the reaction a lipid X + a UDP-2-N,3-O-bis[(3R)-3-hydroxyacyl]-alpha-D-glucosamine = a lipid A disaccharide + UDP + H(+). It functions in the pathway bacterial outer membrane biogenesis; LPS lipid A biosynthesis. Condensation of UDP-2,3-diacylglucosamine and 2,3-diacylglucosamine-1-phosphate to form lipid A disaccharide, a precursor of lipid A, a phosphorylated glycolipid that anchors the lipopolysaccharide to the outer membrane of the cell. In Burkholderia thailandensis (strain ATCC 700388 / DSM 13276 / CCUG 48851 / CIP 106301 / E264), this protein is Lipid-A-disaccharide synthase.